A 985-amino-acid polypeptide reads, in one-letter code: Ankyrin repeat domain-containing protein 24 (985 aa).

5 ANK repeats span residues 52–81 (EGKS…DVMS), 85–114 (AGYN…VVDI), 118–147 (SGWT…HMNP), 151–180 (SGAT…ATND), and 184–213 (QGRT…QLSI). Disordered stretches follow at residues 243–293 (RSSP…DRDA), 311–360 (IRGL…LGRE), 386–412 (QDEE…SAEE), 476–503 (YTEA…TAYQ), and 594–614 (DNAE…NPGM). Residues 291 to 488 (RDAYEEIVRL…AMHSQQQQQE (198 aa)) adopt a coiled-coil conformation. Composition is skewed to basic and acidic residues over residues 311-326 (IRGL…KEPL) and 349-360 (EKQEEKESLGRE).

Homodimer. Interacts (via C-terminal domain) with TRIOBP (via C-terminal domain) isoform 4; recruits TRIOBP isoform 4 to stereocilia rootlets. Expressed in vestibular hair bundles.

The protein localises to the cell membrane. Its subcellular location is the cell projection. It localises to the stereocilium. Component of the stereocilia rootlet in hair cells of inner ear. Bridges the apical plasma membrane with the lower rootlet and maintains normal distribution of TRIOBP, thereby reinforcing stereocilia insertion points and organizing rootlets for hearing with long-term resilience. The chain is Ankyrin repeat domain-containing protein 24 (Ankrd24) from Mus musculus (Mouse).